A 296-amino-acid chain; its full sequence is Probable deoxyuridine 5'-triphosphate nucleotidohydrolase (296 aa).

Residues 66 to 102 (EIDKNIVKNLEDKVNCLEQDVQYLKNELKKKDADWQQ) are a coiled coil.

Belongs to the dUTPase family.

It carries out the reaction dUTP + H2O = dUMP + diphosphate + H(+). The protein operates within pyrimidine metabolism; dUMP biosynthesis; dUMP from dCTP (dUTP route): step 2/2. Functionally, this enzyme is involved in nucleotide metabolism: it produces dUMP, the immediate precursor of thymidine nucleotides and it decreases the intracellular concentration of dUTP so that uracil cannot be incorporated into DNA. The sequence is that of Probable deoxyuridine 5'-triphosphate nucleotidohydrolase from Acheta domesticus (House cricket).